The primary structure comprises 131 residues: Profilin-9 (131 aa).

Cys13 and Cys115 are disulfide-bonded. Residues 81–97 (AVIRGKKGSGGITVKKT) carry the Involved in PIP2 interaction motif. Thr111 carries the phosphothreonine modification.

The protein belongs to the profilin family. Occurs in many kinds of cells as a complex with monomeric actin in a 1:1 ratio. In terms of processing, phosphorylated by MAP kinases.

It is found in the cytoplasm. The protein resides in the cytoskeleton. In terms of biological role, binds to actin and affects the structure of the cytoskeleton. At high concentrations, profilin prevents the polymerization of actin, whereas it enhances it at low concentrations. In Zea mays (Maize), this protein is Profilin-9.